Here is a 210-residue protein sequence, read N- to C-terminus: Na(+)-translocating NADH-quinone reductase subunit D (210 aa).

Helical transmembrane passes span 42-62, 72-92, 103-123, 131-151, and 178-198; these read FVMTLAVTAVTAFSNLFISLI, IIAQMAVIASLVIVVDQVLKA, VFVGLIITNCIVMGRAEAYAM, FLDGIGNGLGYGAVLLTVATV, and NGLLLLPPSAFFIIGLIIWGV.

The protein belongs to the NqrDE/RnfAE family. In terms of assembly, composed of six subunits; NqrA, NqrB, NqrC, NqrD, NqrE and NqrF.

It localises to the cell inner membrane. The enzyme catalyses a ubiquinone + n Na(+)(in) + NADH + H(+) = a ubiquinol + n Na(+)(out) + NAD(+). NQR complex catalyzes the reduction of ubiquinone-1 to ubiquinol by two successive reactions, coupled with the transport of Na(+) ions from the cytoplasm to the periplasm. NqrA to NqrE are probably involved in the second step, the conversion of ubisemiquinone to ubiquinol. This is Na(+)-translocating NADH-quinone reductase subunit D from Aeromonas hydrophila subsp. hydrophila (strain ATCC 7966 / DSM 30187 / BCRC 13018 / CCUG 14551 / JCM 1027 / KCTC 2358 / NCIMB 9240 / NCTC 8049).